A 235-amino-acid polypeptide reads, in one-letter code: MASAEGGGDKYRSFLHGDGEKKTVWRHGAPPNYDLVNKLFEEERTKEWAEGSVEEKVQRLLKTWEMEMVHKVRPEDQKSVNLKNYSASTNGLKPLTREEVMAMGGYNAFLATTLPPEHRIYDPEAESVESATSTFLTAFPRGFAIEVLDVYSSPSAPRIAFKFRHWGYMEGPFKGHPPHGGRVEFFGVCVFHVDEDTKVEKAEFFYERGNFLASFLTAPAASASASGCPVMRGAD.

This Hordeum vulgare (Barley) protein is Pathogen-related protein.